Reading from the N-terminus, the 286-residue chain is Prohibitin-2, mitochondrial (286 aa).

Residues 1–13 (MSFNKVPNIPGAP) are Mitochondrial matrix-facing. A helical; Signal-anchor for type II membrane protein membrane pass occupies residues 14-32 (ALSALLKVSVIGGLGVYAL). At 33–286 (TNSLYNVDGG…LQEMNLEPKK (254 aa)) the chain is on the mitochondrial intermembrane side. A coiled-coil region spans residues 186–219 (KEFTAAIEAKQVAAQEAERAKFIVEKAEQDRRSA).

Belongs to the prohibitin family. As to quaternary structure, component of a prohibitin multimeric complex in mitochondrial membranes. As to expression, mostly expressed in proliferative tissues, including vasculature, shoot and root apical tissues.

It localises to the mitochondrion inner membrane. Its function is as follows. Prohibitin probably acts as a holdase/unfoldase for the stabilization of newly synthesized mitochondrial proteins. This is Prohibitin-2, mitochondrial (PHB2) from Arabidopsis thaliana (Mouse-ear cress).